Reading from the N-terminus, the 460-residue chain is Armadillo repeat-containing protein LFR (460 aa).

The segment covering 1–10 (MSHVRSAPAG) has biased composition (low complexity). The interval 1–32 (MSHVRSAPAGKSGGGGGSTPAKRGRPFGSTTG) is disordered. ARM repeat units follow at residues 225 to 267 (ENET…NLAP), 321 to 360 (NEPF…NVAE), and 364 to 405 (DFRL…SLVS).

Interacts with CHR719, SWI3A and SWI3C. Expressed at low levels in coleoptiles, leaf tongues, mature leaves and nodes during the vegetative phase. Highly expressed in reproductive tissues such as young panicles, early developing seeds, embryos and endosperms.

The protein localises to the nucleus. Plays critical roles in both embryo and endosperm development. Required for free nuclei division and cellularization in early endosperm development, by preventing premature cell death in the endosperm. Involved in the regulation of pattern formation and organ differentiation during embryogenesis, by regulating genes involved in the early stages of seed development. The polypeptide is Armadillo repeat-containing protein LFR (Oryza sativa subsp. japonica (Rice)).